The primary structure comprises 574 residues: ATP-dependent lipid A-core flippase (574 aa).

Transmembrane regions (helical) follow at residues 11 to 31 (LLSY…GFGI), 60 to 80 (WFPL…FMGG), 156 to 176 (YTNW…GVLV), and 244 to 264 (LNSP…VWLA). The ABC transmembrane type-1 domain occupies 23-304 (LLVLVGFGIN…LTDVNEKLQR (282 aa)). The ABC transporter domain maps to 335-570 (VRFDHVTLEY…QGAYFQLHQR (236 aa)). Residue 368–375 (GRSGAGKT) coordinates ATP.

The protein belongs to the ABC transporter superfamily. Lipid exporter (TC 3.A.1.106) family. As to quaternary structure, homodimer.

The protein localises to the cell inner membrane. It carries out the reaction ATP + H2O + lipid A-core oligosaccharideSide 1 = ADP + phosphate + lipid A-core oligosaccharideSide 2.. In terms of biological role, involved in lipopolysaccharide (LPS) biosynthesis. Translocates lipid A-core from the inner to the outer leaflet of the inner membrane. Transmembrane domains (TMD) form a pore in the inner membrane and the ATP-binding domain (NBD) is responsible for energy generation. In Acinetobacter baylyi (strain ATCC 33305 / BD413 / ADP1), this protein is ATP-dependent lipid A-core flippase.